Here is a 296-residue protein sequence, read N- to C-terminus: Glycine--tRNA ligase alpha subunit (296 aa).

Belongs to the class-II aminoacyl-tRNA synthetase family. As to quaternary structure, tetramer of two alpha and two beta subunits.

It localises to the cytoplasm. The enzyme catalyses tRNA(Gly) + glycine + ATP = glycyl-tRNA(Gly) + AMP + diphosphate. In Desulfitobacterium hafniense (strain Y51), this protein is Glycine--tRNA ligase alpha subunit.